Reading from the N-terminus, the 419-residue chain is UDP-N-acetylglucosamine 1-carboxyvinyltransferase (419 aa).

A phosphoenolpyruvate-binding site is contributed by 22–23 (KN). Arg-95 provides a ligand contact to UDP-N-acetyl-alpha-D-glucosamine. Catalysis depends on Cys-119, which acts as the Proton donor. Cys-119 is modified (2-(S-cysteinyl)pyruvic acid O-phosphothioketal). UDP-N-acetyl-alpha-D-glucosamine-binding positions include 164–167 (KVSV), Asp-308, and Ile-330.

It belongs to the EPSP synthase family. MurA subfamily.

It is found in the cytoplasm. The catalysed reaction is phosphoenolpyruvate + UDP-N-acetyl-alpha-D-glucosamine = UDP-N-acetyl-3-O-(1-carboxyvinyl)-alpha-D-glucosamine + phosphate. It participates in cell wall biogenesis; peptidoglycan biosynthesis. Cell wall formation. Adds enolpyruvyl to UDP-N-acetylglucosamine. The polypeptide is UDP-N-acetylglucosamine 1-carboxyvinyltransferase (Rickettsia felis (strain ATCC VR-1525 / URRWXCal2) (Rickettsia azadi)).